Reading from the N-terminus, the 545-residue chain is Chaperonin GroEL (545 aa).

ATP is bound by residues 29-32 (TLGP), Lys-50, 86-90 (DGTTT), Gly-415, and Asp-495.

It belongs to the chaperonin (HSP60) family. As to quaternary structure, forms a cylinder of 14 subunits composed of two heptameric rings stacked back-to-back. Interacts with the co-chaperonin GroES.

The protein resides in the cytoplasm. It catalyses the reaction ATP + H2O + a folded polypeptide = ADP + phosphate + an unfolded polypeptide.. Functionally, together with its co-chaperonin GroES, plays an essential role in assisting protein folding. The GroEL-GroES system forms a nano-cage that allows encapsulation of the non-native substrate proteins and provides a physical environment optimized to promote and accelerate protein folding. This is Chaperonin GroEL from Phocaeicola vulgatus (strain ATCC 8482 / DSM 1447 / JCM 5826 / CCUG 4940 / NBRC 14291 / NCTC 11154) (Bacteroides vulgatus).